A 355-amino-acid chain; its full sequence is Galectin-9 (355 aa).

Galectin domains are found at residues 17-148 (FSGT…ISFQ) and 227-355 (FITT…HVQT). Residues Asn48, His61, Arg65, Asn75, 82 to 88 (WGPEERK), His267, Arg271, Thr281, and 287 to 293 (WGSEERS) contribute to the a beta-D-galactoside site.

Monomer. Peripheral blood leukocytes and lymphatic tissues. Expressed in lung, liver, breast and kidney with higher levels in tumor endothelial cells than normal endothelium (at protein level). Expressed in trophoblast cells in decidua and placenta in pregnancy (at protein level). Isoform 2 is the most abundant isoform expressed in endothelial cells. Upon endothelial cell activation isoform 2 expression decreases while expression of isoform 3 and isoform 5 increases. Isoform 4 decreases in pathological pregnancy.

The protein resides in the cytoplasm. It localises to the nucleus. The protein localises to the secreted. Functionally, binds galactosides. Has high affinity for the Forssman pentasaccharide. Ligand for HAVCR2/TIM3. Binding to HAVCR2 induces T-helper type 1 lymphocyte (Th1) death. Also stimulates bactericidal activity in infected macrophages by causing macrophage activation and IL1B secretion which restricts intracellular bacterial growth. Ligand for P4HB; the interaction retains P4HB at the cell surface of Th2 T-helper cells, increasing disulfide reductase activity at the plasma membrane, altering the plasma membrane redox state and enhancing cell migration. Ligand for CD44; the interaction enhances binding of SMAD3 to the FOXP3 promoter, leading to up-regulation of FOXP3 expression and increased induced regulatory T (iTreg) cell stability and suppressive function. Promotes ability of mesenchymal stromal cells to suppress T-cell proliferation. Expands regulatory T-cells and induces cytotoxic T-cell apoptosis following virus infection. Activates ERK1/2 phosphorylation inducing cytokine (IL-6, IL-8, IL-12) and chemokine (CCL2) production in mast and dendritic cells. Inhibits degranulation and induces apoptosis of mast cells. Induces maturation and migration of dendritic cells. Inhibits natural killer (NK) cell function. Can transform NK cell phenotype from peripheral to decidual during pregnancy. Astrocyte derived galectin-9 enhances microglial TNF production. May play a role in thymocyte-epithelial interactions relevant to the biology of the thymus. May provide the molecular basis for urate flux across cell membranes, allowing urate that is formed during purine metabolism to efflux from cells and serving as an electrogenic transporter that plays an important role in renal and gastrointestinal urate excretion. Highly selective to the anion urate. In terms of biological role, acts as an eosinophil chemoattractant. It also inhibits angiogenesis. Suppresses IFNG production by natural killer cells. The chain is Galectin-9 (LGALS9) from Homo sapiens (Human).